Reading from the N-terminus, the 199-residue chain is Urease accessory protein UreG (199 aa).

8–15 (GPVGSGKT) serves as a coordination point for GTP.

It belongs to the SIMIBI class G3E GTPase family. UreG subfamily. In terms of assembly, homodimer. UreH, UreF and UreG form a complex that acts as a GTP-hydrolysis-dependent molecular chaperone, activating the urease apoprotein by helping to assemble the nickel containing metallocenter of UreC. The UreE protein probably delivers the nickel.

It is found in the cytoplasm. In terms of biological role, facilitates the functional incorporation of the urease nickel metallocenter. This process requires GTP hydrolysis, probably effectuated by UreG. This Helicobacter acinonychis (strain Sheeba) protein is Urease accessory protein UreG.